The primary structure comprises 30 residues: Cysteine-rich venom protein annuliferin-a (30 aa).

The protein belongs to the CRISP family. In terms of processing, contains 8 disulfide bonds. As to expression, expressed by the venom gland.

It localises to the secreted. Functionally, inhibits calcium-activated potassium channels (KCa), voltage-gated potassium channel (Kv), and the calcium release channel/ryanodine receptor (RyR). The protein is Cysteine-rich venom protein annuliferin-a of Naja annulifera (Banded Egyptian cobra).